Consider the following 274-residue polypeptide: 4-diphosphocytidyl-2-C-methyl-D-erythritol kinase (274 aa).

The active site involves Lys-8. ATP is bound at residue 94-104; it reads PSGAGLGGGSA. Residue Asp-136 is part of the active site.

The protein belongs to the GHMP kinase family. IspE subfamily.

The enzyme catalyses 4-CDP-2-C-methyl-D-erythritol + ATP = 4-CDP-2-C-methyl-D-erythritol 2-phosphate + ADP + H(+). It functions in the pathway isoprenoid biosynthesis; isopentenyl diphosphate biosynthesis via DXP pathway; isopentenyl diphosphate from 1-deoxy-D-xylulose 5-phosphate: step 3/6. In terms of biological role, catalyzes the phosphorylation of the position 2 hydroxy group of 4-diphosphocytidyl-2C-methyl-D-erythritol. The protein is 4-diphosphocytidyl-2-C-methyl-D-erythritol kinase of Bacteroides fragilis (strain YCH46).